A 270-amino-acid polypeptide reads, in one-letter code: Putative pyruvate, phosphate dikinase regulatory protein (270 aa).

Residue 151-158 (GVSRTSKT) participates in ADP binding.

This sequence belongs to the pyruvate, phosphate/water dikinase regulatory protein family. PDRP subfamily.

It carries out the reaction N(tele)-phospho-L-histidyl/L-threonyl-[pyruvate, phosphate dikinase] + ADP = N(tele)-phospho-L-histidyl/O-phospho-L-threonyl-[pyruvate, phosphate dikinase] + AMP + H(+). The catalysed reaction is N(tele)-phospho-L-histidyl/O-phospho-L-threonyl-[pyruvate, phosphate dikinase] + phosphate + H(+) = N(tele)-phospho-L-histidyl/L-threonyl-[pyruvate, phosphate dikinase] + diphosphate. Its function is as follows. Bifunctional serine/threonine kinase and phosphorylase involved in the regulation of the pyruvate, phosphate dikinase (PPDK) by catalyzing its phosphorylation/dephosphorylation. In Bacillus velezensis (strain DSM 23117 / BGSC 10A6 / LMG 26770 / FZB42) (Bacillus amyloliquefaciens subsp. plantarum), this protein is Putative pyruvate, phosphate dikinase regulatory protein.